The sequence spans 673 residues: Chaperonin-containing T-complex member BBS12 (673 aa).

This sequence belongs to the TCP-1 chaperonin family. BBS12 subfamily. As to quaternary structure, component of the chaperonin-containing T-complex (TRiC), a heterooligomeric complex of about 850 to 900 kDa that forms two stacked rings, 12 to 16 nm in diameter.

Its subcellular location is the cell projection. The protein resides in the cilium. Functionally, component of the chaperonin-containing T-complex (TRiC), a molecular chaperone complex that assists the folding of proteins upon ATP hydrolysis. The polypeptide is Chaperonin-containing T-complex member BBS12 (bbs12) (Xenopus laevis (African clawed frog)).